Consider the following 126-residue polypeptide: DNA-directed RNA polymerase I subunit RPA12 (126 aa).

Residues cysteine 20, cysteine 23, cysteine 38, cysteine 41, cysteine 87, and cysteine 90 each coordinate Zn(2+). The C4-type zinc finger occupies 20 to 41 (CSDCGSVLPLPGAQDTVTCTRC). The TFIIS-type zinc-finger motif lies at 83 to 123 (VDRRCPRCGHEGMAYHTRQMRSADEGQTVFYTCTNCKFQEK). A Hairpin motif is present at residues 106-107 (DE). The Zn(2+) site is built by cysteine 115 and cysteine 118.

It belongs to the archaeal RpoM/eukaryotic RPA12/RPB9/RPC11 RNA polymerase family. Component of the RNA polymerase I (Pol I) complex consisting of 13 subunits: a ten-subunit catalytic core composed of POLR1A/RPA1, POLR1B/RPA2, POLR1C/RPAC1, POLR1D/RPAC2, POLR1H/RPA12, POLR2E/RPABC1, POLR2F/RPABC2, POLR2H/RPABC3, POLR2K/RPABC4 and POLR2L/RPABC5; a mobile stalk subunit POLR1F/RPA43 protruding from the core and additional subunits homologous to general transcription factors POLR1E/RPA49 and POLR1G/RPA34. Part of Pol I pre-initiation complex (PIC), in which Pol I core assembles with RRN3 and promoter-bound UTBF and SL1/TIF-IB complex.

It localises to the nucleus. Its subcellular location is the nucleolus. In terms of biological role, core component of RNA polymerase I (Pol I), a DNA-dependent RNA polymerase which synthesizes ribosomal RNA precursors using the four ribonucleoside triphosphates as substrates. Can mediate Pol I proofreading of the nascent RNA transcript. Anchors into the Pol I active site to monitor transcription fidelity and cleave mis-incorporated 5'-ribonucleotides. The chain is DNA-directed RNA polymerase I subunit RPA12 from Macaca mulatta (Rhesus macaque).